The primary structure comprises 129 residues: Protein BUNDLE SHEATH DEFECTIVE 2, chloroplastic (129 aa).

A chloroplast-targeting transit peptide spans 1–43 (MAATASLTTTAPSPPALLKASAPLLISFRPVSRHCKNLCIKTK). A CR-type zinc finger spans residues 49 to 123 (QSAKKHQKVK…AGFLGGFLST (75 aa)). Residues Cys62, Cys65, Asn68, Cys73, Cys76, Cys97, Cys100, Glu105, Cys108, and Cys111 each coordinate Zn(2+).

This sequence belongs to the BSD2 chaperone family. Interacts with the RuBisCo large subunit (RbcL) assembled as an intermediate complex made of eight RbcL and eight BSD2 subunits. Expressed in shoot tissues, in both bundle sheath and mesophyll cells.

Its subcellular location is the plastid. The protein resides in the chloroplast stroma. Chloroplast chaperone required for RuBisCo complex biogenesis and translational regulation of the RuBisCo large subunit (RbcL). Stabilizes an end-state assembly intermediate of eight RbcL subunits until the small subunits (RBCSs) become available to produce a complete stable RuBisCo complex containing eight small and eight large subunits. Involved in the differentiation of bundle sheath cells, especially chloroplast structure. The protein is Protein BUNDLE SHEATH DEFECTIVE 2, chloroplastic of Zea mays (Maize).